A 73-amino-acid polypeptide reads, in one-letter code: UPF0346 protein LVIS_0790 (73 aa).

It belongs to the UPF0346 family.

The polypeptide is UPF0346 protein LVIS_0790 (Levilactobacillus brevis (strain ATCC 367 / BCRC 12310 / CIP 105137 / JCM 1170 / LMG 11437 / NCIMB 947 / NCTC 947) (Lactobacillus brevis)).